A 331-amino-acid polypeptide reads, in one-letter code: Trans-O-hydroxybenzylidenepyruvate hydratase-aldolase (331 aa).

This sequence belongs to the DapA family.

The catalysed reaction is (3E)-4-(2-hydroxyphenyl)-2-oxobut-3-enoate + H2O = salicylaldehyde + pyruvate. It functions in the pathway aromatic compound metabolism; naphthalene degradation. Functionally, involved in the naphthalene upper catabolic pathway. Catalyzes the transformation of trans-O-hydroxybenzylidenepyruvate (THBPA) to salicylaldehyde and pyruvate. The reaction is reversible. Can also use substrate which carry trans-alpha,beta-unsaturated keto acid side chain and adjacent hydroxyl group such as trans-4-(3-hydroxy-2-thianaphthenyl)-2-oxo-but-3-enoate, trans-4-(3-hydroxy-2-benzofuranyl)-2-oxobut-3-enoate, and trans-4-(3-hydroxy-2-thienyl)-2-oxobut-3-enoate. This is Trans-O-hydroxybenzylidenepyruvate hydratase-aldolase (nahE) from Pseudomonas putida (Arthrobacter siderocapsulatus).